The primary structure comprises 275 residues: LIM/homeobox protein Awh (275 aa).

LIM zinc-binding domains are found at residues 6 to 67 and 68 to 129; these read RSCA…NFGA and KCSK…TVEG. A Phosphothreonine modification is found at threonine 126. The homeobox DNA-binding region spans 148–207; sequence TKRVRTTFTEEQLQVLQANFQIDSNPDGQDLERIASVTGLSKRVTQVWFQNSRARQKKHI. Residues 253–275 are disordered; sequence PTHESSMDELSQDSSVHCMPSEV.

In terms of tissue distribution, first detected in neuroblasts in stage 9 embryos. Expressed in all 10 abdominal segments and in the labial segment during early embryogenesis. Expressed in the stage 14 developing epithelium. By embryonic stage 16, expression is refined to the abdominal histoblasts and salivary gland imaginal ring cells. Expressed in both larval and imaginal cells between the salivary gland and the salivary gland imaginal ring, in late third instar larvae. Also expressed in specific areas of the larval wing, leg and eye-antennal disks.

It localises to the nucleus. Its function is as follows. Probable transcription factor. Required for the establishment of a subset of imaginal tissues: the abdominal histoblasts and the salivary gland imaginal rings. The protein is LIM/homeobox protein Awh of Drosophila melanogaster (Fruit fly).